A 312-amino-acid polypeptide reads, in one-letter code: Olfactory receptor 867 (312 aa).

The Extracellular segment spans residues 1–6; sequence MILNCN. The helical transmembrane segment at 7–30 threads the bilayer; sequence PFSGLFLSMYLVTVLGNLLIILAV. Residues 31 to 38 lie on the Cytoplasmic side of the membrane; the sequence is SSNSHLHN. A helical transmembrane segment spans residues 39-60; it reads LMYFFLSNLSFVDICFISTTIP. At 61 to 81 the chain is on the extracellular side; the sequence is KMLVNIHSQTKDISYIECLSQ. Residues cysteine 78 and cysteine 160 are joined by a disulfide bond. A helical transmembrane segment spans residues 82 to 101; the sequence is VYFLTTFGGMDNFLLTLMAC. Over 102–120 the chain is Cytoplasmic; the sequence is DRYVAICHPLNYTVIMNLQ. The chain crosses the membrane as a helical span at residues 121–139; that stretch reads LCALLILMFWLIMFCVSLI. Residues 140-177 are Extracellular-facing; it reads HVLLMNELNFSRGTEIPHFFCELAQVLKVANSDTHINN. An N-linked (GlcNAc...) asparagine glycan is attached at asparagine 148. A helical membrane pass occupies residues 178–200; sequence VFMYVVTSLLGLIPMTGILMSYS. Over 201-217 the chain is Cytoplasmic; it reads QIASSLLKMSSSVSKYK. A helical membrane pass occupies residues 218-241; that stretch reads AFSTCGSHLCVVSLFYGSATIVYF. Topologically, residues 242–253 are extracellular; that stretch reads CSSVLHSTHKKM. The helical transmembrane segment at 254 to 273 threads the bilayer; it reads IASLMYTVISPMLNPFIYSL. Residues 274 to 312 are Cytoplasmic-facing; sequence RNKDVKGALGKLFIRVASCPLWSKDFRPKFILKPERQSL.

It belongs to the G-protein coupled receptor 1 family. In terms of tissue distribution, epithelium of the tongue; including the taste buds.

It is found in the cell membrane. Functionally, possible olfactory or taste receptor. In Rattus norvegicus (Rat), this protein is Olfactory receptor 867 (Olr867).